Here is a 292-residue protein sequence, read N- to C-terminus: ATP synthase gamma chain (292 aa).

The protein belongs to the ATPase gamma chain family. F-type ATPases have 2 components, CF(1) - the catalytic core - and CF(0) - the membrane proton channel. CF(1) has five subunits: alpha(3), beta(3), gamma(1), delta(1), epsilon(1). CF(0) has three main subunits: a, b and c.

The protein localises to the cell membrane. Functionally, produces ATP from ADP in the presence of a proton gradient across the membrane. The gamma chain is believed to be important in regulating ATPase activity and the flow of protons through the CF(0) complex. This Prosthecochloris aestuarii (strain DSM 271 / SK 413) protein is ATP synthase gamma chain.